The following is a 245-amino-acid chain: Rhamnogalacturonan acetylesterase (245 aa).

The first 17 residues, 1 to 17 (MKSIALTSLSLLPSALA), serve as a signal peptide directing secretion. The active-site Nucleophile is the S26. C100 and C108 are joined by a disulfide. Active-site residues include D204 and H207. A disulfide bond links C226 and C244.

It belongs to the 'GDSL' lipolytic enzyme family.

It localises to the secreted. It catalyses the reaction Hydrolytic cleavage of 2-O-acetyl- or 3-O-acetyl groups of alpha-D-galacturonic acid in rhamnogalacturonan I.. Its function is as follows. Plays a key role in the degradation of rhamnogalacturonan in the cell wall. Involved in degradation of pectin. The protein is Rhamnogalacturonan acetylesterase of Emericella nidulans (strain FGSC A4 / ATCC 38163 / CBS 112.46 / NRRL 194 / M139) (Aspergillus nidulans).